A 161-amino-acid chain; its full sequence is Nucleotide-binding protein Pfl01_4421 (161 aa).

Belongs to the YajQ family.

Its function is as follows. Nucleotide-binding protein. The protein is Nucleotide-binding protein Pfl01_4421 of Pseudomonas fluorescens (strain Pf0-1).